The following is a 177-amino-acid chain: Large ribosomal subunit protein uL6 (177 aa).

This sequence belongs to the universal ribosomal protein uL6 family. As to quaternary structure, part of the 50S ribosomal subunit.

Functionally, this protein binds to the 23S rRNA, and is important in its secondary structure. It is located near the subunit interface in the base of the L7/L12 stalk, and near the tRNA binding site of the peptidyltransferase center. The chain is Large ribosomal subunit protein uL6 from Methanosarcina barkeri (strain Fusaro / DSM 804).